The chain runs to 195 residues: Probable GTP-binding protein EngB (195 aa).

The 174-residue stretch at 22–195 (GRPEVALAGR…WAALLPFVAS (174 aa)) folds into the EngB-type G domain. Residues 30–37 (GRSNVGKS), 57–61 (GKTQT), 75–78 (DVPG), 142–145 (TKAD), and 174–176 (FSA) each bind GTP. Mg(2+)-binding residues include Ser37 and Thr59.

It belongs to the TRAFAC class TrmE-Era-EngA-EngB-Septin-like GTPase superfamily. EngB GTPase family. Mg(2+) serves as cofactor.

Its function is as follows. Necessary for normal cell division and for the maintenance of normal septation. This is Probable GTP-binding protein EngB from Geobacillus kaustophilus (strain HTA426).